A 409-amino-acid polypeptide reads, in one-letter code: Odorant receptor 35a (409 aa).

At 1–35 (MVRYVPRFADGQKVKLAWPLAVFRLNHIFWPLDPS) the chain is on the cytoplasmic side. Residues 36–56 (TGKWGRYLDKVLAVAMSLVFM) form a helical membrane-spanning segment. Residues 57-64 (QHNDAELR) are Extracellular-facing. The chain crosses the membrane as a helical span at residues 65-85 (YLRFEASNRNLDAFLTGMPTY). Over 86–139 (LILVEAQFRSLHILLHFEKLQKFLEIFYANIYIDPRKEPEMFRKVDGKMIINRL) the chain is Cytoplasmic. The chain crosses the membrane as a helical span at residues 140-160 (VSAMYGAVISLYLIAPVFSII). Asparagine 161 carries an N-linked (GlcNAc...) asparagine glycan. Residues 161–177 (NQSKDFLYSMIFPFDSD) are Extracellular-facing. The helical transmembrane segment at 178-198 (PLYIFVPLLLTNVWVGIVIDT) threads the bilayer. At 199–273 (MMFGETNLLC…QQLEAQYTVR (75 aa)) the chain is on the cytoplasmic side. A helical transmembrane segment spans residues 274-294 (VFIMFAFAAGLLCALSFKAYT). At 295 to 302 (NPMANYIY) the chain is on the extracellular side. Residues 303–323 (AIWFGAKTVELLSLGQIGSDL) traverse the membrane as a helical segment. The Cytoplasmic segment spans residues 324 to 379 (AFTTDSLSTMYYLTHWEQILQYSTNPSENLRLLKLINLAIEMNSKPFYVTGLKYFR). The chain crosses the membrane as a helical span at residues 380-400 (VSLQAGLKILQASFSYFTFLT). Topologically, residues 401-409 (SMQRRQMSN) are extracellular.

It belongs to the insect chemoreceptor superfamily. Heteromeric odorant receptor channel (TC 1.A.69) family. Or1a subfamily. As to quaternary structure, interacts with Orco. Complexes exist early in the endomembrane system in olfactory sensory neurons (OSNs), coupling these complexes to the conserved ciliary trafficking pathway. In terms of tissue distribution, expressed in ac3B olfactory sensory neurons in the antenna.

It localises to the cell membrane. Its function is as follows. Odorant receptor which mediates acceptance or avoidance behavior, depending on its substrates. The odorant receptor repertoire encodes a large collection of odor stimuli that vary widely in identity, intensity, and duration. Forms a complex with Orco to form odorant-sensing units, providing sensitive and prolonged odorant signaling and calcium permeability. Involved in the behavioral responses to esters. Involved in the behavioral responses to butanol, pentanol, hexanol, octanol, propyl acetate, and butyl acetate. This chain is Odorant receptor 35a (Or35a), found in Drosophila melanogaster (Fruit fly).